The following is a 162-amino-acid chain: Phospholipase A and acyltransferase 2 (162 aa).

The Cytoplasmic segment spans residues Met-1–Ala-133. Residues Leu-13–Gln-129 enclose the LRAT domain. Active-site residues include His-23 and His-35. Cys-113 acts as the Acyl-thioester intermediate in catalysis. The helical transmembrane segment at Val-134–Leu-154 threads the bilayer. Over Ala-155 to Gln-162 the chain is Lumenal.

Belongs to the H-rev107 family. As to expression, expressed in liver, kidney, small intestine testis and colon. Undetectable in testis, placenta, salivary gland and fetal brain.

The protein localises to the cytoplasm. The protein resides in the membrane. It catalyses the reaction a 1,2-diacyl-sn-glycero-3-phosphocholine + H2O = a 1-acyl-sn-glycero-3-phosphocholine + a fatty acid + H(+). The enzyme catalyses a 1,2-diacyl-sn-glycero-3-phosphocholine + H2O = a 2-acyl-sn-glycero-3-phosphocholine + a fatty acid + H(+). The catalysed reaction is a 1,2-diacyl-sn-glycero-3-phosphoethanolamine + a 1,2-diacyl-sn-glycero-3-phosphocholine = an N-acyl-1,2-diacyl-sn-glycero-3-phosphoethanolamine + a 1-acyl-sn-glycero-3-phosphocholine + H(+). It carries out the reaction a 1,2-diacyl-sn-glycero-3-phosphoethanolamine + a 1,2-diacyl-sn-glycero-3-phosphocholine = an N-acyl-1,2-diacyl-sn-glycero-3-phosphoethanolamine + a 2-acyl-sn-glycero-3-phosphocholine + H(+). It catalyses the reaction 1,2-dihexadecanoyl-sn-glycero-3-phosphocholine + H2O = 1-hexadecanoyl-sn-glycero-3-phosphocholine + hexadecanoate + H(+). The enzyme catalyses 1,2-dihexadecanoyl-sn-glycero-3-phosphocholine + H2O = 2-hexadecanoyl-sn-glycero-3-phosphocholine + hexadecanoate + H(+). The catalysed reaction is 1-hexadecanoyl-2-(9Z-octadecenoyl)-sn-glycero-3-phosphocholine + H2O = 2-(9Z-octadecenoyl)-sn-glycero-3-phosphocholine + hexadecanoate + H(+). It carries out the reaction 1-hexadecanoyl-2-(9Z-octadecenoyl)-sn-glycero-3-phosphocholine + H2O = 1-hexadecanoyl-sn-glycero-3-phosphocholine + (9Z)-octadecenoate + H(+). It catalyses the reaction 1-hexadecanoyl-2-(5Z,8Z,11Z,14Z-eicosatetraenoyl)-sn-glycero-3-phosphocholine + H2O = 2-(5Z,8Z,11Z,14Z)-eicosatetraenoyl-sn-glycero-3-phosphocholine + hexadecanoate + H(+). The enzyme catalyses 1-hexadecanoyl-2-(9Z,12Z-octadecadienoyl)-sn-glycero-3-phosphoethanolamine + H2O = 1-hexadecanoyl-sn-glycero-3-phosphoethanolamine + (9Z,12Z)-octadecadienoate + H(+). The catalysed reaction is 1-hexadecanoyl-2-(9Z,12Z-octadecadienoyl)-sn-glycero-3-phosphoethanolamine + H2O = 2-(9Z,12Z)-octadecadienoyl-sn-glycero-3-phosphoethanolamine + hexadecanoate + H(+). It carries out the reaction 1-hexadecanoyl-2-(5Z,8Z,11Z,14Z-eicosatetraenoyl)-sn-glycero-3-phosphoethanolamine + H2O = 1-hexadecanoyl-sn-glycero-3-phosphoethanolamine + (5Z,8Z,11Z,14Z)-eicosatetraenoate + H(+). It catalyses the reaction 1-hexadecanoyl-2-(5Z,8Z,11Z,14Z-eicosatetraenoyl)-sn-glycero-3-phosphoethanolamine + H2O = 2-(5Z,8Z,11Z,14Z)-eicosatetraenoyl-sn-glycero-3-phosphoethanolamine + hexadecanoate + H(+). The enzyme catalyses 1,2-di-(9Z-octadecenoyl)-sn-glycero-3-phosphoethanolamine + 1,2-dihexadecanoyl-sn-glycero-3-phosphocholine = N-hexadecanoyl-1,2-di-(9Z-octadecenoyl)-sn-glycero-3-phosphoethanolamine + 2-hexadecanoyl-sn-glycero-3-phosphocholine + H(+). The catalysed reaction is 1,2-di-(9Z-octadecenoyl)-sn-glycero-3-phosphoethanolamine + 1,2-dihexadecanoyl-sn-glycero-3-phosphocholine = N-hexadecanoyl-1,2-di-(9Z-octadecenoyl)-sn-glycero-3-phosphoethanolamine + 1-hexadecanoyl-sn-glycero-3-phosphocholine + H(+). It carries out the reaction 1-hexanoyl-2-acyl-sn-glycero-3-phosphocholine + H2O = 1-hexanoyl-sn-glycero-3-phosphocholine + a fatty acid + H(+). It catalyses the reaction 1,2-diheptadecanoyl-sn-glycero-3-phosphoethanolamine + 1-(9Z-octadecenoyl)-2-hexadecanoyl-sn-glycero-3-phosphocholine = 1,2-diheptadecanoyl-sn-glycero-3-phospho-N-hexadecanoyl-ethanolamine + 1-(9Z-octadecenoyl)-sn-glycero-3-phosphocholine + H(+). The enzyme catalyses 1,2-diheptadecanoyl-sn-glycero-3-phosphoethanolamine + 1-(9Z-octadecenoyl)-2-hexadecanoyl-sn-glycero-3-phosphocholine = 1,2-diheptadecanoyl-sn-glycero-3-phospho-N-(9Z-octadecenoyl)-ethanolamine + 2-hexadecanoyl-sn-glycero-3-phosphocholine + H(+). The catalysed reaction is 1,2-dihexanoyl-sn-glycero-3-phosphocholine + 1,2-diheptanoyl-sn-glycero-3-phosphocholine = 1-heptanoyl-2-hexanoyl-sn-glycero-3-phosphocholine + 1-hexanoyl-2-heptanoyl-sn-glycero-3-phosphocholine. It carries out the reaction 1,2-diheptanoyl-sn-glycero-3-phosphocholine + 1,2-dihexadecanoyl-sn-glycero-3-phosphocholine = 1-hexadecanoyl-2-heptanoyl-sn-glycero-3-phosphocholine + 1-heptanoyl-2-hexadecanoyl-sn-glycero-3-phosphocholine. It catalyses the reaction 1,2-dihexanoyl-sn-glycero-3-phosphoethanolamine + 1,2-diheptanoyl-sn-glycero-3-phosphocholine = 1-heptanoyl-2-hexanoyl-sn-glycero-3-phosphoethanolamine + 1-hexanoyl-2-heptanoyl-sn-glycero-3-phosphocholine. The enzyme catalyses 1-hexanoyl-2-acyl-sn-glycero-3-phosphocholine + H2O = hexanoate + a 2-acyl-sn-glycero-3-phosphocholine + H(+). The catalysed reaction is 1,2-dihexanoyl-sn-glycero-3-phosphoethanolamine + 2-heptanoyl-sn-glycero-3-phosphocholine = hexanoyl-sn-glycero-3-phosphoethanolamine + 1-hexanoyl-2-heptanoyl-sn-glycero-3-phosphocholine. In terms of biological role, exhibits both phospholipase A1/2 and acyltransferase activities. Shows phospholipase A1 (PLA1) and A2 (PLA2) activity, catalyzing the calcium-independent release of fatty acids from the sn-1 or sn-2 position of glycerophospholipids. For most substrates, PLA1 activity is much higher than PLA2 activity. Shows O-acyltransferase activity, catalyzing the transfer of a fatty acyl group from glycerophospholipid to the hydroxyl group of lysophospholipid. Shows N-acyltransferase activity, catalyzing the calcium-independent transfer of a fatty acyl group at the sn-1 position of phosphatidylcholine (PC) and other glycerophospholipids to the primary amine of phosphatidylethanolamine (PE), forming N-acylphosphatidylethanolamine (NAPE), which serves as precursor for N-acylethanolamines (NAEs). Catalyzes N-acylation of PE using both sn-1 and sn-2 palmitoyl groups of PC as acyl donor. Exhibits high phospholipase A1/2 activity and low N-acyltransferase activity. The sequence is that of Phospholipase A and acyltransferase 2 from Homo sapiens (Human).